A 301-amino-acid polypeptide reads, in one-letter code: Mitochondrial substrate carrier family protein Z (301 aa).

The Mitochondrial intermembrane portion of the chain corresponds to 1-19; the sequence is MTGKEENKQQQHVNFPWKR. Solcar repeat units lie at residues 14-101, 116-200, and 210-293; these read NFPW…FTEQ, QQFG…ISDY, and LPVW…VMGI. A helical membrane pass occupies residues 20–37; sequence LVAGAVAGTADVWACHPL. At 38 to 65 the chain is on the mitochondrial matrix side; sequence DRIKTQLQNNPGKSIVGTFGDIVSKGKG. Residues 66–86 form a helical membrane-spanning segment; it reads FTGGVNALYEGILPMTAEAIF. Residues 87 to 117 lie on the Mitochondrial intermembrane side of the membrane; it reads KVGIRYFAFSWFTEQYKTTVYKGETLNKKQQ. The chain crosses the membrane as a helical span at residues 118–138; the sequence is FGANLLGGAFAGTIESFVVVI. The Mitochondrial matrix portion of the chain corresponds to 139 to 174; that stretch reads PCELLKVRHMTQEHNKSFGTVFRDVLREEGFQGLYK. The chain crosses the membrane as a helical span at residues 175–191; the sequence is GGSATLLRQITNHMIRF. The Mitochondrial intermembrane segment spans residues 192-212; it reads PTFYAISDYLKGGDHSVHLPV. Residues 213-229 traverse the membrane as a helical segment; sequence WQNLSAGAIAGTASTLF. At 230–275 the chain is on the mitochondrial matrix side; that stretch reads NNPLDTIKTRMQKQGQNQTTMQVVRGIYQETGVKGYWAGVIPRILR. A helical transmembrane segment spans residues 276–296; it reads VAPGQAITWAVVELVMGILEP. The Mitochondrial intermembrane segment spans residues 297-301; it reads SSKKH.

It belongs to the mitochondrial carrier (TC 2.A.29) family.

The protein resides in the mitochondrion inner membrane. In terms of biological role, mitochondrial solute carriers shuttle metabolites, nucleotides, and cofactors through the mitochondrial inner membrane. The chain is Mitochondrial substrate carrier family protein Z (mcfZ) from Dictyostelium discoideum (Social amoeba).